A 131-amino-acid chain; its full sequence is Profilin-4 (131 aa).

Residues Cys-13 and Cys-115 are joined by a disulfide bond. Residues 81-97 carry the Involved in PIP2 interaction motif; the sequence is AVIRGKKGAGGITVKKT. Thr-111 is subject to Phosphothreonine.

This sequence belongs to the profilin family. In terms of assembly, occurs in many kinds of cells as a complex with monomeric actin in a 1:1 ratio. In terms of processing, phosphorylated by MAP kinases.

It is found in the cytoplasm. The protein localises to the cytoskeleton. In terms of biological role, binds to actin and affects the structure of the cytoskeleton. At high concentrations, profilin prevents the polymerization of actin, whereas it enhances it at low concentrations. The protein is Profilin-4 of Olea europaea (Common olive).